The primary structure comprises 441 residues: Arginine biosynthesis bifunctional protein ArgJ, mitochondrial (441 aa).

Substrate-binding residues include Thr-177, Lys-204, Thr-215, Glu-301, Asn-436, and Ser-441. Thr-215 functions as the Nucleophile in the catalytic mechanism.

Belongs to the ArgJ family. Heterodimer of an alpha and a beta chain. Post-translationally, the alpha and beta chains are autoproteolytically processed from a single precursor protein within the mitochondrion.

Its subcellular location is the mitochondrion matrix. It catalyses the reaction N(2)-acetyl-L-ornithine + L-glutamate = N-acetyl-L-glutamate + L-ornithine. The catalysed reaction is L-glutamate + acetyl-CoA = N-acetyl-L-glutamate + CoA + H(+). It participates in amino-acid biosynthesis; L-arginine biosynthesis; L-ornithine and N-acetyl-L-glutamate from L-glutamate and N(2)-acetyl-L-ornithine (cyclic): step 1/1. It functions in the pathway amino-acid biosynthesis; L-arginine biosynthesis; N(2)-acetyl-L-ornithine from L-glutamate: step 1/4. Catalyzes two activities which are involved in the cyclic version of arginine biosynthesis: the synthesis of acetylglutamate from glutamate and acetyl-CoA, and of ornithine by transacetylation between acetylornithine and glutamate. This chain is Arginine biosynthesis bifunctional protein ArgJ, mitochondrial, found in Kluyveromyces lactis (strain ATCC 8585 / CBS 2359 / DSM 70799 / NBRC 1267 / NRRL Y-1140 / WM37) (Yeast).